Here is a 415-residue protein sequence, read N- to C-terminus: MSRTRTTPGRRVESDVVDIGEHEFESGEILPDLQVAYEAYGEFDGQNAVLVCHGLTGSQHVAGHGTESGVSGQARAWWGDIVGPGKALDTNDYYVICVNVPGSCYGTSGPASEGPDGEPWGTDFPPVTVHDWTRAQRRLLDHLGVGRLHAVVGGSVGGMNALDWAVQFPDDVERLAVVASAARLDSQCLGIDAVARRAITSDPNWNGGDYYGEDRASPDAGLGLARQLGHLMYLSKDSMERKFGRRSAGRGDRGDAFPSDPAAAFFPYREVESYLDYQAEKFAERFDANSYLYLTRAMDDFDLSEGYESDAAALAAFEGESLLVSFTGDWHFTTEQSESLAGAFRRVDAPVAHHVVESDHGHDAFLVEPEKVGPPLGDFVDEGVAGRAVTDTATDGGEPDEEKDFAPVHSSLFSR.

Residues 47 to 369 enclose the AB hydrolase-1 domain; that stretch reads NAVLVCHGLT…HGHDAFLVEP (323 aa). Ser-155 serves as the catalytic Nucleophile. Arg-226 contacts substrate. Catalysis depends on residues Asp-329 and His-362. Asp-363 contacts substrate. Residues 387–415 form a disordered region; it reads RAVTDTATDGGEPDEEKDFAPVHSSLFSR.

The protein belongs to the AB hydrolase superfamily. MetX family. In terms of assembly, homodimer.

Its subcellular location is the cytoplasm. The catalysed reaction is L-homoserine + acetyl-CoA = O-acetyl-L-homoserine + CoA. The protein operates within amino-acid biosynthesis; L-methionine biosynthesis via de novo pathway; O-acetyl-L-homoserine from L-homoserine: step 1/1. In terms of biological role, transfers an acetyl group from acetyl-CoA to L-homoserine, forming acetyl-L-homoserine. This chain is Homoserine O-acetyltransferase, found in Haloferax gibbonsii (strain ATCC 33959 / DSM 4427 / JCM 8863 / NBRC 102184 / NCIMB 2188 / Ma 2.38).